A 432-amino-acid polypeptide reads, in one-letter code: Histidine--tRNA ligase (432 aa).

It belongs to the class-II aminoacyl-tRNA synthetase family.

The protein resides in the cytoplasm. It catalyses the reaction tRNA(His) + L-histidine + ATP = L-histidyl-tRNA(His) + AMP + diphosphate + H(+). The chain is Histidine--tRNA ligase from Pyrococcus furiosus (strain ATCC 43587 / DSM 3638 / JCM 8422 / Vc1).